The primary structure comprises 189 residues: MAPAWSFRLALLLLSCNAICSLGCHLPHTHSLANRRVLMLLGQLRRVSPSSCLQDRNDFAFPQEALGGSQLQKAQAISVLHEVTQHTFQLFSTEGSATMWDESLLDKLRDALDQQLTDLQFCLRQEEELQGAPLLKEDSSLAVRKYFHRLTLYLQEKRHSPCAWEVVRAQVMRAFSSSTNLQESFRRKD.

The signal sequence occupies residues 1 to 23; the sequence is MAPAWSFRLALLLLSCNAICSLG. Cystine bridges form between Cys24–Cys122 and Cys52–Cys162.

It belongs to the alpha/beta interferon family.

The protein resides in the secreted. In terms of biological role, produced by macrophages, IFN-alpha have antiviral activities. Interferon stimulates the production of two enzymes: a protein kinase and an oligoadenylate synthetase. This is Interferon alpha-C (IFNAC) from Bos taurus (Bovine).